Here is a 259-residue protein sequence, read N- to C-terminus: UPF0246 protein NMCC_0856 (259 aa).

This sequence belongs to the UPF0246 family.

In Neisseria meningitidis serogroup C (strain 053442), this protein is UPF0246 protein NMCC_0856.